Reading from the N-terminus, the 192-residue chain is NF-kappa-B inhibitor-interacting Ras-like protein 1 (192 aa).

Residue glycine 11–threonine 18 coordinates GTP. Residues aspartate 35 to tyrosine 43 carry the Effector region motif. The interval histidine 58 to serine 93 is interactions with NFKBIA and NFKBIB. GTP is bound by residues aspartate 61–leucine 65 and asparagine 120–aspartate 123. Residues leucine 168–asparagine 192 are disordered.

This sequence belongs to the small GTPase superfamily. Ras family. KappaB-Ras subfamily. Interacts with both NF-kappa-B inhibitor alpha (NFKBIA) and beta (NFKBIB) in vitro. However, it probably only interacts with NFKBIB in vivo. Forms a complex with NFKBIB and NF-kappa-B heterodimer (p50/NFKB1 and p65/RELA). Also interacts with c-Rel (REL).

It is found in the cytoplasm. Its function is as follows. Atypical Ras-like protein that acts as a potent regulator of NF-kappa-B activity by preventing the degradation of NF-kappa-B inhibitor beta (NFKBIB) by most signals, explaining why NFKBIB is more resistant to degradation. May act by blocking phosphorylation of NFKBIB and mediating cytoplasmic retention of p65/RELA NF-kappa-B subunit. It is unclear whether it acts as a GTPase. Both GTP- and GDP-bound forms block phosphorylation of NFKBIB. This chain is NF-kappa-B inhibitor-interacting Ras-like protein 1 (NKIRAS1), found in Macaca fascicularis (Crab-eating macaque).